A 694-amino-acid polypeptide reads, in one-letter code: Elongation factor G (694 aa).

Residues 8 to 287 (EDYRNFGIMA…AVVEFLPAPT (280 aa)) enclose the tr-type G domain. GTP is bound by residues 17–24 (AHIDAGKT), 86–90 (DTPGH), and 140–143 (NKMD).

This sequence belongs to the TRAFAC class translation factor GTPase superfamily. Classic translation factor GTPase family. EF-G/EF-2 subfamily.

The protein resides in the cytoplasm. Functionally, catalyzes the GTP-dependent ribosomal translocation step during translation elongation. During this step, the ribosome changes from the pre-translocational (PRE) to the post-translocational (POST) state as the newly formed A-site-bound peptidyl-tRNA and P-site-bound deacylated tRNA move to the P and E sites, respectively. Catalyzes the coordinated movement of the two tRNA molecules, the mRNA and conformational changes in the ribosome. This is Elongation factor G from Brucella suis (strain ATCC 23445 / NCTC 10510).